The sequence spans 211 residues: MIGIIDYGMGNLYSVSKALERLRYEYIISDDPKELKNAKGLILPGVGSFKDAMHILRETGLAKFVCEAVNEGTPLLGICLGMQLLFDESEENGLTEGLGLLSGRVVRIPGVTADGNRYKVPHMGWNRLVFRHPSPLLQNVEEGHVYFVHSYYVVTDDDDVVLASSFYNVEVPAVVGKGNVYGTQFHPEKSGEIGMKILQNYASIIEGKGSM.

One can recognise a Glutamine amidotransferase type-1 domain in the interval 1 to 211 (MIGIIDYGMG…ASIIEGKGSM (211 aa)). The Nucleophile role is filled by Cys79. Catalysis depends on residues His186 and Glu188.

As to quaternary structure, heterodimer of HisH and HisF.

The protein localises to the cytoplasm. The catalysed reaction is 5-[(5-phospho-1-deoxy-D-ribulos-1-ylimino)methylamino]-1-(5-phospho-beta-D-ribosyl)imidazole-4-carboxamide + L-glutamine = D-erythro-1-(imidazol-4-yl)glycerol 3-phosphate + 5-amino-1-(5-phospho-beta-D-ribosyl)imidazole-4-carboxamide + L-glutamate + H(+). It carries out the reaction L-glutamine + H2O = L-glutamate + NH4(+). It functions in the pathway amino-acid biosynthesis; L-histidine biosynthesis; L-histidine from 5-phospho-alpha-D-ribose 1-diphosphate: step 5/9. IGPS catalyzes the conversion of PRFAR and glutamine to IGP, AICAR and glutamate. The HisH subunit catalyzes the hydrolysis of glutamine to glutamate and ammonia as part of the synthesis of IGP and AICAR. The resulting ammonia molecule is channeled to the active site of HisF. This is Imidazole glycerol phosphate synthase subunit HisH from Geobacillus sp. (strain WCH70).